We begin with the raw amino-acid sequence, 266 residues long: Sec-independent protein translocase protein TatC (266 aa).

The next 6 helical transmembrane spans lie at Met-28–Phe-48, Phe-93–Phe-113, Gly-134–Leu-154, Leu-183–Phe-203, His-221–Thr-241, and Ile-242–Val-262.

The protein belongs to the TatC family. In terms of assembly, forms a complex with TatA.

It is found in the cell inner membrane. In terms of biological role, part of the twin-arginine translocation (Tat) system that transports large folded proteins containing a characteristic twin-arginine motif in their signal peptide across membranes. This Blattabacterium sp. subsp. Periplaneta americana (strain BPLAN) (Periplaneta americana symbiotic bacterium) protein is Sec-independent protein translocase protein TatC.